The chain runs to 205 residues: Cryptic plasmid protein C (205 aa).

The interval 142–205 (THGYSDPDDP…RAGNAGKGRF (64 aa)) is disordered. Residues 155-174 (QSMTQAKDLPRNTQEAAQSI) show a composition bias toward polar residues. Residues 189 to 205 (QAKKPRRRAGNAGKGRF) show a composition bias toward basic residues.

This chain is Cryptic plasmid protein C (cppC), found in Neisseria gonorrhoeae.